The sequence spans 2837 residues: Probable polyketide synthase 3 (2837 aa).

Residues 39–464 (NNGIGIIGIG…GSNVCIILKD (426 aa)) form the Ketosynthase family 3 (KS3) domain. Active-site for beta-ketoacyl synthase activity residues include Cys-209, His-348, and His-388. The tract at residues 664 to 697 (GIKPTFIVGHSLGEVTAAYCSGMIDLETECYLIY) is acyl/malonyl transferase. Ser-674 (for acyl/malonyl transferase activity) is an active-site residue. The segment at 962-1084 (IDILGNSITD…GNFQLFKHNG (123 aa)) is N-terminal hotdog fold. Positions 962-1255 (IDILGNSITD…CTSLTPIQDS (294 aa)) constitute a PKS/mFAS DH domain. Catalysis depends on His-995, which acts as the Proton acceptor; for dehydratase activity. Positions 1106–1255 (NLTKLTKEDL…CTSLTPIQDS (150 aa)) are C-terminal hotdog fold. Asp-1169 serves as the catalytic Proton donor; for dehydratase activity. Residues 2330–2407 (DNKNSVNQMF…SSIKIITNSL (78 aa)) form the Carrier domain. An O-(pantetheine 4'-phosphoryl)serine modification is found at Ser-2367. Residues 2464 to 2484 (KVILLSGSTGFLGGYLLLNLV) form a helical membrane-spanning segment.

The cofactor is pantetheine 4'-phosphate.

The protein localises to the membrane. Functionally, probable polyketide synthase. This chain is Probable polyketide synthase 3 (pks3), found in Dictyostelium discoideum (Social amoeba).